The following is a 298-amino-acid chain: Probable endonuclease 4 (298 aa).

The Zn(2+) site is built by histidine 69, histidine 111, glutamate 146, aspartate 180, histidine 183, histidine 215, aspartate 228, histidine 230, and glutamate 260.

This sequence belongs to the AP endonuclease 2 family. The cofactor is Zn(2+).

The enzyme catalyses Endonucleolytic cleavage to 5'-phosphooligonucleotide end-products.. Its function is as follows. Endonuclease IV plays a role in DNA repair. It cleaves phosphodiester bonds at apurinic or apyrimidinic (AP) sites, generating a 3'-hydroxyl group and a 5'-terminal sugar phosphate. This Bacillus mycoides (strain KBAB4) (Bacillus weihenstephanensis) protein is Probable endonuclease 4.